Reading from the N-terminus, the 389-residue chain is Probable peptidoglycan glycosyltransferase FtsW (389 aa).

Residues 1 to 14 (MPIRDWRQQSQRWP) lie on the Cytoplasmic side of the membrane. The chain crosses the membrane as a helical span at residues 15–35 (IDYWLIGALAILITLGLTMVA). Residues 36–57 (SSSIAISEKRFGDPTHYLLRQM) lie on the Periplasmic side of the membrane. Residues 58–78 (FSMGLGLMAAYIVLKIPLSFW) form a helical membrane-spanning segment. The Cytoplasmic segment spans residues 79-84 (RKHRGQ). The chain crosses the membrane as a helical span at residues 85-105 (LFIVGLVLLVLVLVFGREING). Over 106–111 (SKRWLP) the chain is Periplasmic. The helical transmembrane segment at 112-132 (LVLMNFQVSEFMKIAVVVFMA) threads the bilayer. Topologically, residues 133 to 144 (GYLDRHATAVRE) are cytoplasmic. A helical membrane pass occupies residues 145-165 (SFEAVIRLALPFGVMAILLLL). At 166–168 (EPD) the chain is on the periplasmic side. Residues 169-189 (FGSTFVIAVIITGMLLIAGAP) traverse the membrane as a helical segment. At 190 to 191 (WR) the chain is on the cytoplasmic side. Residues 192–212 (FFVMTVLPIATLLVMMVITSP) form a helical membrane-spanning segment. The Periplasmic portion of the chain corresponds to 213–268 (YRMARVTNFLDPWSDPFGNGYQLTQALIASGRGEWFGVGIGESVQKLLYLPDAHTD). The chain crosses the membrane as a helical span at residues 269-289 (FLFSIYAEEYGLIGVAFLALL). Residues 290–310 (YLTLLYRCFRIGRKAFNQTHY) lie on the Cytoplasmic side of the membrane. A helical membrane pass occupies residues 311 to 331 (FGGLIAYGVGIWIVLQAMINM). Residues 332–344 (GVNLGLFPTKGLT) are Periplasmic-facing. A helical transmembrane segment spans residues 345–365 (LPFMSYGGSSVLMLFIGVAMV). The Cytoplasmic segment spans residues 366–389 (LRVDLETRQAVLEHSVDESGQGKR).

The protein belongs to the SEDS family. FtsW subfamily.

Its subcellular location is the cell inner membrane. The catalysed reaction is [GlcNAc-(1-&gt;4)-Mur2Ac(oyl-L-Ala-gamma-D-Glu-L-Lys-D-Ala-D-Ala)](n)-di-trans,octa-cis-undecaprenyl diphosphate + beta-D-GlcNAc-(1-&gt;4)-Mur2Ac(oyl-L-Ala-gamma-D-Glu-L-Lys-D-Ala-D-Ala)-di-trans,octa-cis-undecaprenyl diphosphate = [GlcNAc-(1-&gt;4)-Mur2Ac(oyl-L-Ala-gamma-D-Glu-L-Lys-D-Ala-D-Ala)](n+1)-di-trans,octa-cis-undecaprenyl diphosphate + di-trans,octa-cis-undecaprenyl diphosphate + H(+). The protein operates within cell wall biogenesis; peptidoglycan biosynthesis. Peptidoglycan polymerase that is essential for cell division. The polypeptide is Probable peptidoglycan glycosyltransferase FtsW (Hydrogenovibrio crunogenus (strain DSM 25203 / XCL-2) (Thiomicrospira crunogena)).